Reading from the N-terminus, the 441-residue chain is Ribosomal protein uS12 methylthiotransferase RimO (441 aa).

In terms of domain architecture, MTTase N-terminal spans 8–118 (PKIGFVSLGC…VLEHVHHYVP (111 aa)). [4Fe-4S] cluster is bound by residues cysteine 17, cysteine 53, cysteine 82, cysteine 150, cysteine 154, and cysteine 157. The Radical SAM core domain occupies 136–373 (LTPRHYAYLK…MQLQQQISAE (238 aa)). Positions 376 to 441 (QEKVGREILV…DEYDLWGSRV (66 aa)) constitute a TRAM domain.

It belongs to the methylthiotransferase family. RimO subfamily. It depends on [4Fe-4S] cluster as a cofactor.

It is found in the cytoplasm. The enzyme catalyses L-aspartate(89)-[ribosomal protein uS12]-hydrogen + (sulfur carrier)-SH + AH2 + 2 S-adenosyl-L-methionine = 3-methylsulfanyl-L-aspartate(89)-[ribosomal protein uS12]-hydrogen + (sulfur carrier)-H + 5'-deoxyadenosine + L-methionine + A + S-adenosyl-L-homocysteine + 2 H(+). In terms of biological role, catalyzes the methylthiolation of an aspartic acid residue of ribosomal protein uS12. The polypeptide is Ribosomal protein uS12 methylthiotransferase RimO (Shigella flexneri).